Here is a 388-residue protein sequence, read N- to C-terminus: Xylose isomerase (388 aa).

Residues His54 and Asp57 contribute to the active site. Positions 181, 217, 220, 245, 255, 257, and 287 each coordinate Mg(2+).

Belongs to the xylose isomerase family. In terms of assembly, homotetramer. Mg(2+) serves as cofactor.

Its subcellular location is the cytoplasm. The enzyme catalyses alpha-D-xylose = alpha-D-xylulofuranose. The chain is Xylose isomerase from Streptomyces thermocyaneoviolaceus.